Reading from the N-terminus, the 371-residue chain is DNA replication and repair protein RecF (371 aa).

Position 30–37 (30–37 (GPNAQGKT)) interacts with ATP.

It belongs to the RecF family.

The protein resides in the cytoplasm. In terms of biological role, the RecF protein is involved in DNA metabolism; it is required for DNA replication and normal SOS inducibility. RecF binds preferentially to single-stranded, linear DNA. It also seems to bind ATP. In Desulforamulus reducens (strain ATCC BAA-1160 / DSM 100696 / MI-1) (Desulfotomaculum reducens), this protein is DNA replication and repair protein RecF.